Consider the following 430-residue polypeptide: Tol-Pal system protein TolB (430 aa).

An N-terminal signal peptide occupies residues 1–21 (MRRFVTLLIALLCLSATAVQA).

This sequence belongs to the TolB family. The Tol-Pal system is composed of five core proteins: the inner membrane proteins TolA, TolQ and TolR, the periplasmic protein TolB and the outer membrane protein Pal. They form a network linking the inner and outer membranes and the peptidoglycan layer.

The protein localises to the periplasm. Its function is as follows. Part of the Tol-Pal system, which plays a role in outer membrane invagination during cell division and is important for maintaining outer membrane integrity. This is Tol-Pal system protein TolB from Syntrophotalea carbinolica (strain DSM 2380 / NBRC 103641 / GraBd1) (Pelobacter carbinolicus).